We begin with the raw amino-acid sequence, 297 residues long: N-acetylmuramic acid 6-phosphate etherase (297 aa).

Residues 55–218 enclose the SIS domain; sequence ITKHFKQGGR…STGAMVGIGK (164 aa). E83 serves as the catalytic Proton donor. The active site involves E114.

This sequence belongs to the GCKR-like family. MurNAc-6-P etherase subfamily. Homodimer.

The enzyme catalyses N-acetyl-D-muramate 6-phosphate + H2O = N-acetyl-D-glucosamine 6-phosphate + (R)-lactate. It participates in amino-sugar metabolism; N-acetylmuramate degradation. Specifically catalyzes the cleavage of the D-lactyl ether substituent of MurNAc 6-phosphate, producing GlcNAc 6-phosphate and D-lactate. In Oenococcus oeni (strain ATCC BAA-331 / PSU-1), this protein is N-acetylmuramic acid 6-phosphate etherase.